A 353-amino-acid polypeptide reads, in one-letter code: Phosphate acyltransferase (353 aa).

This sequence belongs to the PlsX family. As to quaternary structure, homodimer. Probably interacts with PlsY.

Its subcellular location is the cytoplasm. It carries out the reaction a fatty acyl-[ACP] + phosphate = an acyl phosphate + holo-[ACP]. Its pathway is lipid metabolism; phospholipid metabolism. In terms of biological role, catalyzes the reversible formation of acyl-phosphate (acyl-PO(4)) from acyl-[acyl-carrier-protein] (acyl-ACP). This enzyme utilizes acyl-ACP as fatty acyl donor, but not acyl-CoA. The sequence is that of Phosphate acyltransferase from Rhodopseudomonas palustris (strain BisB18).